The chain runs to 113 residues: MHEMSLCEGVIEIIEREAQQQNFAKVRTVWLEIGALSHVEPEAMRFCFSAVSHDTIAADARFEIVSVPGAAWCMACAKTVPLKQRYEPCPDCGGHQLQVTAGDELRVKELEVD.

Residue His-2 coordinates Ni(2+). Cys-73, Cys-76, Cys-89, and Cys-92 together coordinate Zn(2+).

It belongs to the HypA/HybF family.

Functionally, involved in the maturation of [NiFe] hydrogenases. Required for nickel insertion into the metal center of the hydrogenase. The protein is Hydrogenase maturation factor HypA of Rhodopseudomonas palustris (strain BisA53).